Reading from the N-terminus, the 1448-residue chain is Glutamate receptor ionotropic, NMDA 2B (1448 aa).

Residues 1-24 (MRPTEACCYLKISLIILFYMGCYA) form the signal peptide. At 25-554 (QKHPNMDIAV…SAFLEPFSAD (530 aa)) the chain is on the extracellular side. Cysteine 81 and cysteine 316 are disulfide-bonded. Residues histidine 122 and glutamate 279 each contribute to the Zn(2+) site. N-linked (GlcNAc...) asparagine glycosylation occurs at asparagine 336. 2 cysteine pairs are disulfide-bonded: cysteine 426–cysteine 453 and cysteine 433–cysteine 454. L-glutamate is bound by residues threonine 511 and arginine 516. The chain crosses the membrane as a helical span at residues 555–573 (VWVMMFVMLLIVSAVAVFV). Residues 574-600 (FEYFSPVGYNRCLADGREPGGPSFTIG) are Cytoplasmic-facing. Positions 601–620 (KAIWLLWGLVFNNSVPVQNP) form an intramembrane region, discontinuously helical. Residues 601–620 (KAIWLLWGLVFNNSVPVQNP) form a pore-forming region. Topologically, residues 621 to 627 (KGTTSKI) are cytoplasmic. The chain crosses the membrane as a helical span at residues 628 to 643 (MVSVWAFFAVIFLASY). At 644–819 (TANLAAFMIQ…LDIDNMAGVF (176 aa)) the chain is on the extracellular side. A glycan (N-linked (GlcNAc...) asparagine) is linked at asparagine 685. Residues 687–688 (ST) and aspartate 729 each bind L-glutamate. A disulfide bond links cysteine 743 and cysteine 798. Residues 820–839 (YMLAAAMALSLITFIMEHLF) traverse the membrane as a helical segment. Over 840-1448 (FWQLRHCFMG…EKLSSIESDV (609 aa)) the chain is Cytoplasmic. Over residues 1254–1265 (APNSKYPQSPNG) the composition is skewed to polar residues. The tract at residues 1254-1277 (APNSKYPQSPNGKAQKRNRSKLHR) is disordered. Over residues 1267-1277 (AQKRNRSKLHR) the composition is skewed to basic residues.

Belongs to the glutamate-gated ion channel (TC 1.A.10.1) family. NR2B/GRIN2B subfamily. In terms of assembly, heterotetramer. Forms heterotetrameric channels composed of two GluN1/zeta subunits (GRIN1), and two identical GluN2/epsilon subunits (GRIN2A, GRIN2B, GRIN2C or GRIN2D) or GluN3 subunits (GRIN3A or GRIN3B) (in vitro). In vivo, the subunit composition may depend on the expression levels of the different subunits. As to expression, detected in oocytes.

The protein resides in the cell membrane. It localises to the postsynaptic cell membrane. The catalysed reaction is Ca(2+)(in) = Ca(2+)(out). It catalyses the reaction Na(+)(in) = Na(+)(out). It carries out the reaction K(+)(in) = K(+)(out). Component of N-methyl-D-aspartate (NMDA) receptors (NMDARs) that function as heterotetrameric, ligand-gated cation channels with high calcium permeability and voltage-dependent block by Mg(2+). Channel activation requires binding of the neurotransmitter L-glutamate to the GluN2 subunit, glycine binding to the GluN1 subunit, plus membrane depolarization to eliminate channel inhibition by Mg(2+). NMDARs mediate simultaneously the potasium efflux and the influx of calcium and sodium. Each GluN2 subunit confers differential attributes to channel properties, including activation, deactivation and desensitization kinetics, pH sensitivity, Ca2(+) permeability, and binding to allosteric modulators. This Xenopus laevis (African clawed frog) protein is Glutamate receptor ionotropic, NMDA 2B.